Consider the following 919-residue polypeptide: Periodic tryptophan protein 2 homolog (919 aa).

WD repeat units lie at residues Gly12–Leu50, Ala53–Phe93, His94–Asn132, Gly142–Tyr181, and Gly186–Arg225. The disordered stretch occupies residues Gln238–Glu267. The span at Glu240–Gly251 shows a compositional bias: acidic residues. The segment covering Asp252–Glu267 has biased composition (basic and acidic residues). WD repeat units follow at residues Gly286–Ser325, Ile328–Lys368, Gly371–Thr410, Glu413–Thr452, Pro456–Ser498, Gly499–Glu538, Ala541–Ser580, Ala603–Arg642, and Lys700–Glu740. The interval Thr882–Ala919 is disordered. The segment covering Gly890–Asp900 has biased composition (acidic residues). A phosphoserine mark is found at Ser898 and Ser902.

This sequence belongs to the WD repeat PWP2 family. In terms of assembly, part of the small subunit (SSU) processome, composed of more than 70 proteins and the RNA chaperone small nucleolar RNA (snoRNA) U3.

Its subcellular location is the nucleus. It is found in the nucleolus. Part of the small subunit (SSU) processome, first precursor of the small eukaryotic ribosomal subunit. During the assembly of the SSU processome in the nucleolus, many ribosome biogenesis factors, an RNA chaperone and ribosomal proteins associate with the nascent pre-rRNA and work in concert to generate RNA folding, modifications, rearrangements and cleavage as well as targeted degradation of pre-ribosomal RNA by the RNA exosome. The protein is Periodic tryptophan protein 2 homolog of Homo sapiens (Human).